We begin with the raw amino-acid sequence, 315 residues long: Porphobilinogen deaminase (315 aa).

Cysteine 234 is subject to S-(dipyrrolylmethanemethyl)cysteine.

It belongs to the HMBS family. Monomer. Dipyrromethane serves as cofactor.

It catalyses the reaction 4 porphobilinogen + H2O = hydroxymethylbilane + 4 NH4(+). It functions in the pathway porphyrin-containing compound metabolism; protoporphyrin-IX biosynthesis; coproporphyrinogen-III from 5-aminolevulinate: step 2/4. Tetrapolymerization of the monopyrrole PBG into the hydroxymethylbilane pre-uroporphyrinogen in several discrete steps. The protein is Porphobilinogen deaminase of Mycobacterium avium (strain 104).